A 257-amino-acid chain; its full sequence is Aspartate/glutamate leucyltransferase (257 aa).

The protein belongs to the R-transferase family. Bpt subfamily.

It localises to the cytoplasm. The enzyme catalyses N-terminal L-glutamyl-[protein] + L-leucyl-tRNA(Leu) = N-terminal L-leucyl-L-glutamyl-[protein] + tRNA(Leu) + H(+). It carries out the reaction N-terminal L-aspartyl-[protein] + L-leucyl-tRNA(Leu) = N-terminal L-leucyl-L-aspartyl-[protein] + tRNA(Leu) + H(+). Functions in the N-end rule pathway of protein degradation where it conjugates Leu from its aminoacyl-tRNA to the N-termini of proteins containing an N-terminal aspartate or glutamate. The chain is Aspartate/glutamate leucyltransferase from Leptospira interrogans serogroup Icterohaemorrhagiae serovar copenhageni (strain Fiocruz L1-130).